The primary structure comprises 397 residues: tRNA-specific 2-thiouridylase MnmA (397 aa).

ATP-binding positions include 19–26 (AMSGGVDS) and Leu-45. Cys-113 functions as the Nucleophile in the catalytic mechanism. Cys-113 and Cys-210 are joined by a disulfide. Gly-137 contacts ATP. The interval 160 to 162 (RDQ) is interaction with tRNA. The Cysteine persulfide intermediate role is filled by Cys-210.

It belongs to the MnmA/TRMU family.

The protein localises to the cytoplasm. It catalyses the reaction S-sulfanyl-L-cysteinyl-[protein] + uridine(34) in tRNA + AH2 + ATP = 2-thiouridine(34) in tRNA + L-cysteinyl-[protein] + A + AMP + diphosphate + H(+). Functionally, catalyzes the 2-thiolation of uridine at the wobble position (U34) of tRNA, leading to the formation of s(2)U34. The protein is tRNA-specific 2-thiouridylase MnmA of Bradyrhizobium sp. (strain BTAi1 / ATCC BAA-1182).